Here is a 204-residue protein sequence, read N- to C-terminus: Protein FAM167A (204 aa).

Residues 58–80 (GLAVSDGSTELEKDAGLKPRATP) are disordered. Positions 113–146 (LRKELMEMRIQDQQLARQLMRLRGDINKLKVEQT) form a coiled coil.

This sequence belongs to the FAM167 (SEC) family.

The polypeptide is Protein FAM167A (fam167a) (Danio rerio (Zebrafish)).